A 1040-amino-acid polypeptide reads, in one-letter code: Multidrug resistance protein MdtB (1040 aa).

Transmembrane regions (helical) follow at residues 25–45, 342–362, 369–389, 396–416, 440–460, 472–492, 537–557, 863–883, 888–908, 911–931, 967–987, and 998–1018; these read LLMV…PVAA, DTQF…YLFL, IIPG…MVFL, LTLM…IVVI, IGFT…PLLF, FAVT…TLTP, WLTL…WVFI, LGST…VLGV, FIHP…ALLA, IAGS…IGIV, PILM…LSTG, and IGMV…TPVI.

The protein belongs to the resistance-nodulation-cell division (RND) (TC 2.A.6) family. MdtB subfamily. Part of a tripartite efflux system composed of MdtA, MdtB and MdtC. MdtB forms a heteromultimer with MdtC.

The protein resides in the cell inner membrane. This Citrobacter koseri (strain ATCC BAA-895 / CDC 4225-83 / SGSC4696) protein is Multidrug resistance protein MdtB.